The sequence spans 348 residues: CCAAT/enhancer-binding protein beta (348 aa).

The interval 1–24 (MQRLVVWDPVCLPLPPPPPAFKSM) is required for Lys-174 sumoylation. An Asymmetric dimethylarginine; by CARM1 modification is found at Arg3. A required for MYC transcriptional repression region spans residues 24 to 135 (MEVANFYYEA…YGGKNCKKAA (112 aa)). An N6-acetyllysine; alternate modification is found at Lys43. Lys43 is modified (N6-methylated lysine; alternate). Disordered stretches follow at residues 44–65 (AAPAAPPADRPGPRPPTGELGS) and 79–112 (LEPLGAPQAPAPTTASDTFEAAPSAPAPVPASSG). Residues 47-59 (AAPPADRPGPRPP) show a composition bias toward pro residues. The short motif at 116–124 (DFLSDLFSD) is the 9aaTAD element. N6-acetyllysine; by KAT2A and KAT2B is present on residues Lys129 and Lys132. The residue at position 133 (Lys133) is an N6-acetyllysine; by KAT2A and KAT2B; alternate. A Glycyl lysine isopeptide (Lys-Gly) (interchain with G-Cter in SUMO2); alternate cross-link involves residue Lys133. Positions 158–178 (APLHPPPPPPPPPAELKAEPG) are disordered. The span at 160-171 (LHPPPPPPPPPA) shows a compositional bias: pro residues. Residue Lys174 forms a Glycyl lysine isopeptide (Lys-Gly) (interchain with G-Cter in SUMO2); alternate linkage. Lys174 is covalently cross-linked (Glycyl lysine isopeptide (Lys-Gly) (interchain with G-Cter in SUMO); alternate). Glycyl lysine isopeptide (Lys-Gly) (interchain with G-Cter in SUMO2) cross-links involve residues Lys185 and Lys187. The span at 219-259 (SGSSGSLSTSSSSSPPGTPSPADAKATPAAAACYAGAAPAP) shows a compositional bias: low complexity. Residues 219–277 (SGSSGSLSTSSSSSPPGTPSPADAKATPAAAACYAGAAPAPSQVKSKAKKTVDKHSDEY) form a disordered region. Thr227 bears the Phosphothreonine; by GSK3-beta mark. Residues Ser228 and Ser229 are each glycosylated (O-linked (GlcNAc) serine). At Ser232 the chain carries Phosphoserine; by GSK3-beta. Position 236 is a phosphothreonine; by RPS6KA1, CDK2 and MAPK (Thr236). Residues Lys263 and Lys265 each participate in a glycyl lysine isopeptide (Lys-Gly) (interchain with G-Cter in SUMO2) cross-link. Over residues 268–277 (KTVDKHSDEY) the composition is skewed to basic and acidic residues. Position 269 is a phosphothreonine; by RPS6KA1 and PKC/PRKCA (Thr269). The bZIP domain maps to 274 to 337 (SDEYKIRRER…STLRNLFKTL (64 aa)). A basic motif region spans residues 278–298 (KIRRERNNIAVRKSRDKAKMR). The residue at position 291 (Ser291) is a Phosphoserine; by PKC/PRKCA. Residues 300-307 (LETQHKVL) are leucine-zipper. Residue Ser328 is modified to Phosphoserine; by CaMK2. A Glycyl lysine isopeptide (Lys-Gly) (interchain with G-Cter in SUMO2) cross-link involves residue Lys335.

It belongs to the bZIP family. C/EBP subfamily. Binds DNA as a homodimer and as a heterodimer. Interacts with ATF4. Binds DNA as a heterodimer with ATF4. Interacts with MYB; within the complex, MYB and CEBPB bind to different promoter regions. Can form stable heterodimers with CEBPA, CEBPD and CEBPG. Interacts with SIX1. Interacts with TRIM28 and PTGES2. Interacts with PRDM16. Interacts with CCDC85B. Forms a complex with THOC5. Interacts with ZNF638; this interaction increases transcriptional activation. Interacts with CIDEA and CIDEC; these interactions increase transcriptional activation of a subset of CEBPB downstream target genes. Interacts with DDIT3/CHOP. Interacts with EP300; recruits EP300 to chromatin. Interacts with RORA; the interaction disrupts interaction with EP300. Interacts (not methylated) with MED23, MED26, SMARCA2, SMARCB1 and SMARCC1. Interacts with KAT2A and KAT2B. Interacts with ATF5; EP300 is required for ATF5 and CEBPB interaction and DNA binding. Interacts with NFE2L1; the heterodimer represses expression of DSPP during odontoblast differentiation. In terms of processing, methylated. Methylation at Arg-3 by CARM1 and at Lys-43 by EHMT2 inhibit transactivation activity. Methylation is probably inhibited by phosphorylation at Thr-236. Sumoylated by polymeric chains of SUMO2 or SUMO3. Sumoylation at Lys-174 is required for inhibition of T-cells proliferation. In adipocytes, sumoylation at Lys-174 by PIAS1 leads to ubiquitination and subsequent proteasomal degradation. Desumoylated by SENP2, which abolishes ubiquitination and stabilizes protein levels. Post-translationally, ubiquitinated, leading to proteasomal degradation. In terms of processing, phosphorylated at Thr-236 by MAPK and CDK2, serves to prime phosphorylation at Thr-227 and Ser-232 by GSK3B and acquire DNA-binding as well as transactivation activities, required to induce adipogenesis. MAPK and CDK2 act sequentially to maintain Thr-236 in the primed phosphorylated state during mitotical cloning expansion and thereby progression of terminal differentiation. Phosphorylation at Thr-269 enhances transactivation activity. Phosphorylation at Ser-328 in response to calcium increases transactivation activity. Phosphorylated at Thr-236 by RPS6KA1. O-glycosylated, glycosylation at Ser-228 and Ser-229 prevents phosphorylation on Thr-236, Ser-232 and Thr-227 and DNA binding activity which delays the adipocyte differentiation program. Post-translationally, acetylated. Acetylation at Lys-43 is an important and dynamic regulatory event that contributes to its ability to transactivate target genes, including those associated with adipogenesis and adipocyte function. Deacetylation by HDAC1 represses its transactivation activity. Acetylated by KAT2A and KAT2B within a cluster of lysine residues between amino acids 129-133, this acetylation is strongly induced by glucocorticoid treatment and enhances transactivation activity.

The protein resides in the nucleus. It localises to the cytoplasm. Its function is as follows. Important transcription factor regulating the expression of genes involved in immune and inflammatory responses. Also plays a significant role in adipogenesis, as well as in the gluconeogenic pathway, liver regeneration, and hematopoiesis. The consensus recognition site is 5'-T[TG]NNGNAA[TG]-3'. Its functional capacity is governed by protein interactions and post-translational protein modifications. During early embryogenesis, plays essential and redundant roles with CEBPA. Has a promitotic effect on many cell types such as hepatocytes and adipocytes but has an antiproliferative effect on T-cells by repressing MYC expression, facilitating differentiation along the T-helper 2 lineage. Binds to regulatory regions of several acute-phase and cytokines genes and plays a role in the regulation of acute-phase reaction and inflammation. Also plays a role in intracellular bacteria killing. During adipogenesis, is rapidly expressed and, after activation by phosphorylation, induces CEBPA and PPARG, which turn on the series of adipocyte genes that give rise to the adipocyte phenotype. The delayed transactivation of the CEBPA and PPARG genes by CEBPB appears necessary to allow mitotic clonal expansion and thereby progression of terminal differentiation. Essential for female reproduction because of a critical role in ovarian follicle development. Restricts osteoclastogenesis: together with NFE2L1; represses expression of DSPP during odontoblast differentiation. This Bos taurus (Bovine) protein is CCAAT/enhancer-binding protein beta (CEBPB).